The chain runs to 431 residues: Dihydroorotase (431 aa).

Zn(2+)-binding residues include H59 and H61. Substrate-binding positions include 61 to 63 (HLR) and N93. Positions 151, 178, 231, and 304 each coordinate Zn(2+). D304 is an active-site residue. Residues H308 and 322–323 (FG) contribute to the substrate site.

Belongs to the metallo-dependent hydrolases superfamily. DHOase family. Class I DHOase subfamily. The cofactor is Zn(2+).

It carries out the reaction (S)-dihydroorotate + H2O = N-carbamoyl-L-aspartate + H(+). The protein operates within pyrimidine metabolism; UMP biosynthesis via de novo pathway; (S)-dihydroorotate from bicarbonate: step 3/3. Its function is as follows. Catalyzes the reversible cyclization of carbamoyl aspartate to dihydroorotate. This is Dihydroorotase from Caldanaerobacter subterraneus subsp. tengcongensis (strain DSM 15242 / JCM 11007 / NBRC 100824 / MB4) (Thermoanaerobacter tengcongensis).